A 119-amino-acid polypeptide reads, in one-letter code: uncharacterized protein (119 aa).

2 helical membrane passes run 57–77 (FSHH…SILF) and 80–100 (YIFV…FILH).

The protein localises to the membrane. This is an uncharacterized protein from Saccharomyces cerevisiae (strain ATCC 204508 / S288c) (Baker's yeast).